The chain runs to 538 residues: Putative cysteine ligase BshC (538 aa).

Residues 419 to 445 (IEAKRQIQAMEQLLAEKYSELASYLEE) adopt a coiled-coil conformation.

It belongs to the BshC family.

Its function is as follows. Involved in bacillithiol (BSH) biosynthesis. May catalyze the last step of the pathway, the addition of cysteine to glucosamine malate (GlcN-Mal) to generate BSH. The chain is Putative cysteine ligase BshC from Lysinibacillus sphaericus (strain C3-41).